Reading from the N-terminus, the 155-residue chain is 6,7-dimethyl-8-ribityllumazine synthase (155 aa).

Residues phenylalanine 23, 57–59 (AYE), and 81–83 (AVI) each bind 5-amino-6-(D-ribitylamino)uracil. (2S)-2-hydroxy-3-oxobutyl phosphate is bound at residue 86–87 (AT). Histidine 89 functions as the Proton donor in the catalytic mechanism. Residue phenylalanine 114 coordinates 5-amino-6-(D-ribitylamino)uracil. A (2S)-2-hydroxy-3-oxobutyl phosphate-binding site is contributed by arginine 128.

The protein belongs to the DMRL synthase family.

It carries out the reaction (2S)-2-hydroxy-3-oxobutyl phosphate + 5-amino-6-(D-ribitylamino)uracil = 6,7-dimethyl-8-(1-D-ribityl)lumazine + phosphate + 2 H2O + H(+). It functions in the pathway cofactor biosynthesis; riboflavin biosynthesis; riboflavin from 2-hydroxy-3-oxobutyl phosphate and 5-amino-6-(D-ribitylamino)uracil: step 1/2. Functionally, catalyzes the formation of 6,7-dimethyl-8-ribityllumazine by condensation of 5-amino-6-(D-ribitylamino)uracil with 3,4-dihydroxy-2-butanone 4-phosphate. This is the penultimate step in the biosynthesis of riboflavin. This is 6,7-dimethyl-8-ribityllumazine synthase from Desulfotalea psychrophila (strain LSv54 / DSM 12343).